We begin with the raw amino-acid sequence, 40 residues long: ATCDLLSGIGVQHSACALHCVFRGNRGGYCTGKGICVCRN.

Cystine bridges form between Cys-3/Cys-30, Cys-16/Cys-36, and Cys-20/Cys-38.

Belongs to the invertebrate defensin family. Type 1 subfamily. As to expression, hemocytes and fat body.

The protein resides in the secreted. Functionally, sapecins, which are potent bactericidal proteins, are produced in response to injury. Sapecin C is cytotoxic to Gram-positive bacteria. This Sarcophaga peregrina (Flesh fly) protein is Sapecin-C.